A 1157-amino-acid polypeptide reads, in one-letter code: Voltage-dependent calcium channel subunit alpha-2/delta-2 (1157 aa).

The N-terminal stretch at 1 to 18 (MAVPARTCGASWPGPVRT) is a signal peptide. Residues 1–37 (MAVPARTCGASWPGPVRTARPWPGRGPRPCPDPRGPA) are disordered. Over 19 to 1119 (ARPWPGRGPR…TEDTSDCGRG (1101 aa)) the chain is Extracellular. Pro residues predominate over residues 24–34 (GRGPRPCPDPR). A glycan (N-linked (GlcNAc...) asparagine) is linked at asparagine 205. The VWFA domain occupies 294 to 472 (DMVIIVDVSG…INTQEYLDVL (179 aa)). A divalent metal cation-binding residues include aspartate 300, serine 302, and serine 304. Positions 300-304 (DVSGS) match the MIDAS-like motif motif. 6 N-linked (GlcNAc...) asparagine glycosylation sites follow: asparagine 389, asparagine 421, asparagine 510, asparagine 543, asparagine 627, and asparagine 864. The cysteines at positions 446 and 1104 are disulfide-linked. The region spanning 488–577 (WTNVYEDALG…KPQITNFREP (90 aa)) is the Cache domain. A helical membrane pass occupies residues 1120–1140 (ASFPPSLGVLVSLQLLLLLGL). The Cytoplasmic segment spans residues 1141–1157 (PPRPQPQIHSFTPSRRL).

This sequence belongs to the calcium channel subunit alpha-2/delta family. In terms of assembly, dimer formed of alpha-2-2 and delta-2 chains; disulfide-linked. Voltage-dependent calcium channels are multisubunit complexes, consisting of alpha-1 (CACNA1), alpha-2 (CACNA2D), beta (CACNB) and delta (CACNA2D) subunits in a 1:1:1:1 ratio. N-glycosylated. In terms of processing, may be proteolytically processed into subunits alpha-2-2 and delta-2 that are disulfide-linked. It is however unclear whether such cleavage really takes place in vivo and has a functional role. In terms of tissue distribution, in heart, it is highly expressed in atrium and at lower level in ventricle.

Its subcellular location is the membrane. In terms of biological role, the alpha-2/delta subunit of voltage-dependent calcium channels regulates calcium current density and activation/inactivation kinetics of the calcium channel. Acts as a regulatory subunit for P/Q-type calcium channel (CACNA1A), N-type (CACNA1B), L-type (CACNA1C OR CACNA1D) and possibly T-type (CACNA1G). Overexpression induces apoptosis. This chain is Voltage-dependent calcium channel subunit alpha-2/delta-2 (Cacna2d2), found in Rattus norvegicus (Rat).